The sequence spans 230 residues: uncharacterized protein (230 aa).

This is an uncharacterized protein from Mycobacterium tuberculosis (strain ATCC 25618 / H37Rv).